Consider the following 459-residue polypeptide: uncharacterized protein (459 aa).

In terms of domain architecture, TRAM spans 9 to 67 (KLEVGQTFPVTIKRLGINGEGVGYFKRQVVFIPGALPGEEVVAETTKIQRGFAEAKVKK). [4Fe-4S] cluster is bound by residues Cys-80, Cys-86, Cys-89, and Cys-168. Residues Gln-292, Tyr-321, Asp-342, and Asp-390 each coordinate S-adenosyl-L-methionine. Cys-417 functions as the Nucleophile in the catalytic mechanism.

Belongs to the class I-like SAM-binding methyltransferase superfamily. RNA M5U methyltransferase family.

This is an uncharacterized protein from Bacillus anthracis.